The chain runs to 56 residues: Potassium channel toxin alpha-KTx 9.1 (56 aa).

The first 28 residues, 1-28, serve as a signal peptide directing secretion; the sequence is MSRLFTLVLIVLAMNVMMAIISDPVVEA. 3 disulfides stabilise this stretch: Cys31-Cys47, Cys34-Cys52, and Cys38-Cys54.

Expressed by the venom gland.

The protein localises to the secreted. Blocks small conductance calcium-activated potassium channels (KCNN, SK). Weakly inhibits the Kv7.1/KCNQ1 channel (10 uM of the toxin inhibits currents by 23.3%). Low toxicity by intracerebroventricular injection into mice. The sequence is that of Potassium channel toxin alpha-KTx 9.1 from Olivierus martensii (Manchurian scorpion).